The primary structure comprises 145 residues: Ribonuclease HI (145 aa).

Residues 1 to 142 form the RNase H type-1 domain; it reads MNQTVYLYTD…ADDLANRGAA (142 aa). Residues Asp10, Glu48, Asp70, and Asp134 each coordinate Mg(2+).

This sequence belongs to the RNase H family. As to quaternary structure, monomer. Mg(2+) serves as cofactor.

The protein resides in the cytoplasm. It carries out the reaction Endonucleolytic cleavage to 5'-phosphomonoester.. Its function is as follows. Endonuclease that specifically degrades the RNA of RNA-DNA hybrids. The chain is Ribonuclease HI from Neisseria meningitidis serogroup B (strain ATCC BAA-335 / MC58).